Here is a 260-residue protein sequence, read N- to C-terminus: MVLIRVLANLLILQLSYAQKSSELIIGGDECNINEHRFLVALYTFRSRRFHCGGTLINQEWVLSAARCDRKNIRIKLGMHSTNVTNEDVQTRVPKEKFFCLSSKTYTKWNKDIMLIRLKRPVNNSTHIAPVSLPSNPPSLGSVCRVMGWGTISATKETHPDVPHCANINILDYSVCRAAYARLPATSRTLCAGILEGGKDTCHGDSGGPLICNGQVQGIVSWGGHPCGQPRKPGLYTKVFDHLDWIKSIIAGNKDATCPP.

The signal sequence occupies residues 1–18 (MVLIRVLANLLILQLSYA). A propeptide spanning residues 19 to 24 (QKSSEL) is cleaved from the precursor. Positions 25 to 251 (IIGGDECNIN…HLDWIKSIIA (227 aa)) constitute a Peptidase S1 domain. Disulfide bonds link Cys-31-Cys-165, Cys-52-Cys-68, Cys-100-Cys-258, Cys-144-Cys-212, Cys-176-Cys-191, and Cys-202-Cys-227. Asn-83, Asn-123, and Asn-124 each carry an N-linked (GlcNAc...) asparagine glycan.

Belongs to the peptidase S1 family. Snake venom subfamily. As to expression, expressed by the venom gland.

The protein resides in the secreted. In terms of biological role, snake venom serine protease homolog that may act in the hemostasis system of the prey. This is Snake venom serine protease homolog 2A (TLG2A) from Craspedocephalus gramineus (Bamboo pit viper).